Consider the following 129-residue polypeptide: Glycine cleavage system H protein (129 aa).

Residues 23–104 enclose the Lipoyl-binding domain; it reads TATIGITQHA…AYAAWLFRLK (82 aa). Lys64 carries the post-translational modification N6-lipoyllysine.

The protein belongs to the GcvH family. In terms of assembly, the glycine cleavage system is composed of four proteins: P, T, L and H. It depends on (R)-lipoate as a cofactor.

The glycine cleavage system catalyzes the degradation of glycine. The H protein shuttles the methylamine group of glycine from the P protein to the T protein. In Nitrosospira multiformis (strain ATCC 25196 / NCIMB 11849 / C 71), this protein is Glycine cleavage system H protein.